We begin with the raw amino-acid sequence, 48 residues long: Large ribosomal subunit protein bL33A (48 aa).

It belongs to the bacterial ribosomal protein bL33 family.

This Exiguobacterium sibiricum (strain DSM 17290 / CCUG 55495 / CIP 109462 / JCM 13490 / 255-15) protein is Large ribosomal subunit protein bL33A.